We begin with the raw amino-acid sequence, 479 residues long: Ribosomal RNA small subunit methyltransferase F (479 aa).

S-adenosyl-L-methionine contacts are provided by residues 125–131 (AAAPGSK), Glu149, Asp176, and Asp194. Cys247 (nucleophile) is an active-site residue.

Belongs to the class I-like SAM-binding methyltransferase superfamily. RsmB/NOP family.

The protein localises to the cytoplasm. The catalysed reaction is cytidine(1407) in 16S rRNA + S-adenosyl-L-methionine = 5-methylcytidine(1407) in 16S rRNA + S-adenosyl-L-homocysteine + H(+). Functionally, specifically methylates the cytosine at position 1407 (m5C1407) of 16S rRNA. This Escherichia coli O139:H28 (strain E24377A / ETEC) protein is Ribosomal RNA small subunit methyltransferase F.